Reading from the N-terminus, the 469-residue chain is tRNA-2-methylthio-N(6)-dimethylallyladenosine synthase (469 aa).

Positions R22–Q142 constitute an MTTase N-terminal domain. [4Fe-4S] cluster is bound by residues C31, C67, C105, C183, C187, and C190. One can recognise a Radical SAM core domain in the interval R169 to E401. One can recognise a TRAM domain in the interval E404–E466.

This sequence belongs to the methylthiotransferase family. MiaB subfamily. Monomer. It depends on [4Fe-4S] cluster as a cofactor.

The protein localises to the cytoplasm. It catalyses the reaction N(6)-dimethylallyladenosine(37) in tRNA + (sulfur carrier)-SH + AH2 + 2 S-adenosyl-L-methionine = 2-methylsulfanyl-N(6)-dimethylallyladenosine(37) in tRNA + (sulfur carrier)-H + 5'-deoxyadenosine + L-methionine + A + S-adenosyl-L-homocysteine + 2 H(+). Its function is as follows. Catalyzes the methylthiolation of N6-(dimethylallyl)adenosine (i(6)A), leading to the formation of 2-methylthio-N6-(dimethylallyl)adenosine (ms(2)i(6)A) at position 37 in tRNAs that read codons beginning with uridine. This Rhizobium etli (strain CIAT 652) protein is tRNA-2-methylthio-N(6)-dimethylallyladenosine synthase.